A 369-amino-acid chain; its full sequence is MNKRPRDEPSSSFASAPKRQYGAGGGGYGGHGYSEERSSARRVADHYSARSNQTLEERENSPIIHLKKLNNWIKSVLIQLYAHPGDCVLDLACGKGGDLIKWDKAKVGYYVGVDIAEGSIKDCMTRYNGDTDQQRRKKFSFPARLICADCYEARLDEHLYEDAPFDICSCQFALHYSWSTEARARQALANVSALLRPGGVFIGTMPDANVIIKRLRETDGMEFGNGVYWISFGEEYAEKKFPASRPFGIKYKFHLEDAVDCPEWVVPFHLFKLLAEEYDLELVLTKNFHEFVHEYLQKPEFAELMRRLGALGDGRQDQSTLSQDEWEVAYLYLAFVLRKRGQPPSQRRANNANRGKMFLTENDIDFLGV.

The tract at residues 1-55 (MNKRPRDEPSSSFASAPKRQYGAGGGGYGGHGYSEERSSARRVADHYSARSNQTL) is disordered. Residues 22-32 (GAGGGGYGGHG) show a composition bias toward gly residues. A compositionally biased stretch (basic and acidic residues) spans 33–48 (YSEERSSARRVADHYS). An mRNA cap 0 methyltransferase domain is found at 61-340 (SPIIHLKKLN…LYLAFVLRKR (280 aa)). MRNA is bound at residue 70 to 71 (NN). S-adenosyl-L-methionine is bound by residues Lys74, Ala92, Asp114, 149–150 (DC), and 171–173 (QFA).

The protein belongs to the class I-like SAM-binding methyltransferase superfamily. mRNA cap 0 methyltransferase family.

It localises to the nucleus. It catalyses the reaction a 5'-end (5'-triphosphoguanosine)-ribonucleoside in mRNA + S-adenosyl-L-methionine = a 5'-end (N(7)-methyl 5'-triphosphoguanosine)-ribonucleoside in mRNA + S-adenosyl-L-homocysteine. In terms of biological role, mRNA-capping methyltransferase that methylates the N7 position of the added guanosine to the 5'-cap structure of mRNAs. Binds RNA containing 5'-terminal GpppC. The polypeptide is mRNA cap guanine-N(7) methyltransferase 1 (Oryza sativa subsp. japonica (Rice)).